The primary structure comprises 446 residues: Radical S-adenosyl methionine domain-containing protein 1, mitochondrial (446 aa).

A Radical SAM core domain is found at 15–277 (KGYNKLKDLP…VCEAEAMGFQ (263 aa)). [4Fe-4S] cluster is bound by residues Cys34, Cys38, and Cys41. S-adenosyl-L-methionine is bound by residues Gly94, 95–96 (GT), Glu130, Gln159, Arg171, and Asp195.

It belongs to the anaerobic coproporphyrinogen-III oxidase family. HemW subfamily.

Its subcellular location is the mitochondrion. May be a heme chaperone, appears to bind heme. Homologous bacterial proteins do not have oxygen-independent coproporphyrinogen-III oxidase activity. Binds 1 [4Fe-4S] cluster. The cluster is coordinated with 3 cysteines and an exchangeable S-adenosyl-L-methionine. This chain is Radical S-adenosyl methionine domain-containing protein 1, mitochondrial (rsad1), found in Dictyostelium discoideum (Social amoeba).